We begin with the raw amino-acid sequence, 463 residues long: Fumarate hydratase class II (463 aa).

Substrate is bound by residues 97 to 99, Arg-125, 128 to 131, 138 to 140, and Thr-186; these read SGT, HPND, and SSN. Residues 121 to 134 are compositionally biased toward basic and acidic residues; it reads RGEGRKVHPNDHVN. The interval 121–142 is disordered; that stretch reads RGEGRKVHPNDHVNRGQSSNDT. His-187 serves as the catalytic Proton donor/acceptor. Ser-317 is an active-site residue. Substrate-binding positions include Ser-318 and 323–325; that span reads KVN.

The protein belongs to the class-II fumarase/aspartase family. Fumarase subfamily. In terms of assembly, homotetramer.

The protein localises to the cytoplasm. The catalysed reaction is (S)-malate = fumarate + H2O. It functions in the pathway carbohydrate metabolism; tricarboxylic acid cycle; (S)-malate from fumarate: step 1/1. Involved in the TCA cycle. Catalyzes the stereospecific interconversion of fumarate to L-malate. This is Fumarate hydratase class II from Bordetella bronchiseptica (strain ATCC BAA-588 / NCTC 13252 / RB50) (Alcaligenes bronchisepticus).